We begin with the raw amino-acid sequence, 358 residues long: Putative ZDHHC-type palmitoyltransferase 4 (358 aa).

Transmembrane regions (helical) follow at residues 28-48 (FVGF…TIIF), 57-77 (LFFI…TYGI), 171-191 (YFFL…AHSL), and 210-230 (LLVI…GSFG). The DHHC domain maps to 127 to 177 (SYCKKCSKAKPPRCHHCSVCDKCVLKMDHHCPWIGGCVGFYNYRYFFLFLS). N-linked (GlcNAc...) asparagine glycans are attached at residues N255 and N296. The interval 302 to 358 (NNKNNENNENNENNEIDNHNNNNNNNNNNNNNEKEDNINENDNLISYDTDEYNRHKK) is disordered. Residues 305-332 (NNENNENNENNEIDNHNNNNNNNNNNNN) show a composition bias toward low complexity.

This sequence belongs to the DHHC palmitoyltransferase family.

The protein localises to the membrane. The enzyme catalyses L-cysteinyl-[protein] + hexadecanoyl-CoA = S-hexadecanoyl-L-cysteinyl-[protein] + CoA. The polypeptide is Putative ZDHHC-type palmitoyltransferase 4 (Dictyostelium discoideum (Social amoeba)).